The following is a 402-amino-acid chain: F-box protein At4g22390 (402 aa).

The F-box domain maps to 1-49 (MAECPTDLINEMFLRLRATTLVKCRVLSKPCFSLIDSPEFVSSHLRRRL).

The protein is F-box protein At4g22390 of Arabidopsis thaliana (Mouse-ear cress).